Here is a 185-residue protein sequence, read N- to C-terminus: Large ribosomal subunit protein uL5 (185 aa).

The protein belongs to the universal ribosomal protein uL5 family. As to quaternary structure, part of the 50S ribosomal subunit; part of the 5S rRNA/L5/L18/L25 subcomplex. Contacts the 5S rRNA and the P site tRNA. Forms a bridge to the 30S subunit in the 70S ribosome.

Functionally, this is one of the proteins that bind and probably mediate the attachment of the 5S RNA into the large ribosomal subunit, where it forms part of the central protuberance. In the 70S ribosome it contacts protein S13 of the 30S subunit (bridge B1b), connecting the 2 subunits; this bridge is implicated in subunit movement. Contacts the P site tRNA; the 5S rRNA and some of its associated proteins might help stabilize positioning of ribosome-bound tRNAs. In Caulobacter sp. (strain K31), this protein is Large ribosomal subunit protein uL5.